A 79-amino-acid polypeptide reads, in one-letter code: Large ribosomal subunit protein eL38 (79 aa).

The protein belongs to the eukaryotic ribosomal protein eL38 family.

The sequence is that of Large ribosomal subunit protein eL38 (RPL38) from Theileria parva (East coast fever infection agent).